The following is a 92-amino-acid chain: DNA-binding protein HU 1 (92 aa).

T4 bears the Phosphothreonine mark.

It belongs to the bacterial histone-like protein family. In terms of assembly, homodimer. (Microbial infection) Interacts with Bacillus phage SP01 Gp46; the interaction replaces dsDNA from the hbs-DNA complex.

The protein localises to the cytoplasm. Its subcellular location is the nucleoid. Functionally, histone-like DNA-binding protein which introduces negative supercoils in relaxed plasmid DNA in the presence of topoisomerase I. There are at least 20,000 monomers/cell. Capable of wrapping DNA to stabilize it, and thus to prevent its denaturation under extreme environmental conditions. Binds evenly across chromosome, does not display a preference for AT content. Binds ss- and dsDNA in a sequence non-specific manner; 8 nucleotides are sufficient to bind protein. This Bacillus subtilis (strain 168) protein is DNA-binding protein HU 1.